Consider the following 99-residue polypeptide: Cyclin-dependent protein kinase inhibitor SMR7 (99 aa).

The disordered stretch occupies residues 49 to 70; the sequence is ICITPTARGAKTPECPAAPRKR.

As to expression, expressed in root meristems after induction.

In terms of biological role, probable cyclin-dependent protein kinase (CDK) inhibitor that functions as a repressor of mitosis in the endoreduplication cell cycle. Acts as a potent cell cycle inhibitor, regulating a hydroxyurea-dependent checkpoint in leaves. This is Cyclin-dependent protein kinase inhibitor SMR7 from Arabidopsis thaliana (Mouse-ear cress).